A 98-amino-acid polypeptide reads, in one-letter code: Sec-independent protein translocase protein TatA (98 aa).

The helical transmembrane segment at 1 to 21 threads the bilayer; sequence MGAMSPWHWAIVALVVVILFG. Residues 43–98 are disordered; that stretch reads VKEMQNDNSTPAPTAQSAPPPQSAPAELPVADTTTAPVTPPAPVQPQSQHTEPKSA. Positions 66–79 are enriched in low complexity; it reads APAELPVADTTTAP.

It belongs to the TatA/E family. The Tat system comprises two distinct complexes: a TatABC complex, containing multiple copies of TatA, TatB and TatC subunits, and a separate TatA complex, containing only TatA subunits. Substrates initially bind to the TatABC complex, which probably triggers association of the separate TatA complex to form the active translocon.

Its subcellular location is the cell membrane. In terms of biological role, part of the twin-arginine translocation (Tat) system that transports large folded proteins containing a characteristic twin-arginine motif in their signal peptide across membranes. TatA could form the protein-conducting channel of the Tat system. This is Sec-independent protein translocase protein TatA from Rhodococcus erythropolis (Arthrobacter picolinophilus).